We begin with the raw amino-acid sequence, 315 residues long: Zinc finger CCCH domain-containing protein 23 (315 aa).

Residues 1–21 form a disordered region; the sequence is MMIGENKNRPHPTIHIPQWDQ. C3H1-type zinc fingers lie at residues 131 to 157 and 165 to 189; these read YSGT…HGVF and RYRT…HTTE.

The protein is Zinc finger CCCH domain-containing protein 23 of Arabidopsis thaliana (Mouse-ear cress).